The primary structure comprises 444 residues: Phosphoglucosamine mutase (444 aa).

The active-site Phosphoserine intermediate is Ser-102. Residues Ser-102, Asp-241, Asp-243, and Asp-245 each contribute to the Mg(2+) site. Ser-102 carries the post-translational modification Phosphoserine.

This sequence belongs to the phosphohexose mutase family. Requires Mg(2+) as cofactor. Post-translationally, activated by phosphorylation.

The enzyme catalyses alpha-D-glucosamine 1-phosphate = D-glucosamine 6-phosphate. Functionally, catalyzes the conversion of glucosamine-6-phosphate to glucosamine-1-phosphate. In Leptothrix cholodnii (strain ATCC 51168 / LMG 8142 / SP-6) (Leptothrix discophora (strain SP-6)), this protein is Phosphoglucosamine mutase.